A 236-amino-acid chain; its full sequence is Small ribosomal subunit protein uS2c (236 aa).

The protein belongs to the universal ribosomal protein uS2 family.

The protein localises to the plastid. The protein resides in the chloroplast. In Panax ginseng (Korean ginseng), this protein is Small ribosomal subunit protein uS2c (rps2).